We begin with the raw amino-acid sequence, 170 residues long: Cytochrome b6-f complex subunit 4 (170 aa).

3 helical membrane passes run 46 to 66 (LLFMFPVVILGTIGVIVGLSV), 105 to 125 (LLGIALMSAIPVGLLFVPFIE), and 141 to 161 (TVFLIGTLVTLYLGIGATLPL).

It belongs to the cytochrome b family. PetD subfamily. As to quaternary structure, the 4 large subunits of the cytochrome b6-f complex are cytochrome b6, subunit IV (17 kDa polypeptide, PetD), cytochrome f and the Rieske protein, while the 4 small subunits are PetG, PetL, PetM and PetN. The complex functions as a dimer.

Its subcellular location is the cellular thylakoid membrane. Component of the cytochrome b6-f complex, which mediates electron transfer between photosystem II (PSII) and photosystem I (PSI), cyclic electron flow around PSI, and state transitions. The chain is Cytochrome b6-f complex subunit 4 from Synechococcus sp. (strain JA-2-3B'a(2-13)) (Cyanobacteria bacterium Yellowstone B-Prime).